We begin with the raw amino-acid sequence, 39 residues long: uncharacterized protein (39 aa).

This is an uncharacterized protein from Dictyostelium discoideum (Social amoeba).